Consider the following 148-residue polypeptide: Large ribosomal subunit protein bL9 (148 aa).

Belongs to the bacterial ribosomal protein bL9 family.

Functionally, binds to the 23S rRNA. This chain is Large ribosomal subunit protein bL9, found in Leptospira biflexa serovar Patoc (strain Patoc 1 / Ames).